The sequence spans 214 residues: A-type ATP synthase subunit D (214 aa).

Belongs to the V-ATPase D subunit family. As to quaternary structure, has multiple subunits with at least A(3), B(3), C, D, E, F, H, I and proteolipid K(x).

It localises to the cell membrane. Functionally, component of the A-type ATP synthase that produces ATP from ADP in the presence of a proton gradient across the membrane. In Pyrococcus abyssi (strain GE5 / Orsay), this protein is A-type ATP synthase subunit D.